The primary structure comprises 518 residues: Cytochrome P450 monooxygenase COX1 (518 aa).

Residues 7–25 (VLIALSSIVVAYFVKTALA) form a helical membrane-spanning segment. Residues N48, N100, N292, N302, and N351 are each glycosylated (N-linked (GlcNAc...) asparagine). C450 provides a ligand contact to heme. N457 carries N-linked (GlcNAc...) asparagine glycosylation.

The protein belongs to the cytochrome P450 family. Heme serves as cofactor.

Its subcellular location is the membrane. It participates in secondary metabolite biosynthesis. Its function is as follows. Cytochrome P450 monooxygenase; part of the gene cluster that mediates the biosynthesis of alpha-cuprenene and oxidized derivatives. The alpha-cuprenene synthase COP6 is the only sesquiterpene synthase identified in C.cinereus that appears to be part of a biosynthetic gene cluster and is highly specific since it catalyzes the cyclization of (2E,6E)-farnesyl diphosphate into only one product, alpha-cuprenene. The cytochrome P450 monooxygenase COX2 then oxidizes the cyclohexadiene ring of alpha-cuprenene at positions 1 and 4, yielding first alpha-cuparene, followed by alpha-cuparophenol and a further yet unidentified compound resulting from one additional oxidation step. The cytochrome P450 monooxygenase COX1 then likely catalyzes the oxidation at position 9 of the pentane ring of alpha-cuprenene to give the corresponding hydroxy or ketone derivatives. This Coprinopsis cinerea (strain Okayama-7 / 130 / ATCC MYA-4618 / FGSC 9003) (Inky cap fungus) protein is Cytochrome P450 monooxygenase COX1.